Consider the following 177-residue polypeptide: Ribosome maturation factor RimM (177 aa).

The PRC barrel domain occupies 98–171 (GETIFLSEIK…AVVMDLPEGL (74 aa)).

This sequence belongs to the RimM family. In terms of assembly, binds ribosomal protein uS19.

The protein localises to the cytoplasm. Functionally, an accessory protein needed during the final step in the assembly of 30S ribosomal subunit, possibly for assembly of the head region. Essential for efficient processing of 16S rRNA. May be needed both before and after RbfA during the maturation of 16S rRNA. It has affinity for free ribosomal 30S subunits but not for 70S ribosomes. The chain is Ribosome maturation factor RimM from Bdellovibrio bacteriovorus (strain ATCC 15356 / DSM 50701 / NCIMB 9529 / HD100).